Reading from the N-terminus, the 376-residue chain is Erythronate-4-phosphate dehydrogenase (376 aa).

Residues S45 and T67 each contribute to the substrate site. Position 147 (D147) interacts with NAD(+). R209 is a catalytic residue. D233 is an NAD(+) binding site. E238 is a catalytic residue. Residue H255 is the Proton donor of the active site. NAD(+) is bound at residue G258. Y259 is a substrate binding site.

It belongs to the D-isomer specific 2-hydroxyacid dehydrogenase family. PdxB subfamily. Homodimer.

It localises to the cytoplasm. It catalyses the reaction 4-phospho-D-erythronate + NAD(+) = (R)-3-hydroxy-2-oxo-4-phosphooxybutanoate + NADH + H(+). Its pathway is cofactor biosynthesis; pyridoxine 5'-phosphate biosynthesis; pyridoxine 5'-phosphate from D-erythrose 4-phosphate: step 2/5. In terms of biological role, catalyzes the oxidation of erythronate-4-phosphate to 3-hydroxy-2-oxo-4-phosphonooxybutanoate. This chain is Erythronate-4-phosphate dehydrogenase, found in Shewanella baltica (strain OS223).